The primary structure comprises 431 residues: Serine--tRNA ligase (431 aa).

L-serine is bound at residue 238-240 (TSE). An ATP-binding site is contributed by 269–271 (RSE). Glu292 contributes to the L-serine binding site. 356–359 (EISS) is an ATP binding site. Ser391 serves as a coordination point for L-serine.

The protein belongs to the class-II aminoacyl-tRNA synthetase family. Type-1 seryl-tRNA synthetase subfamily. As to quaternary structure, homodimer. The tRNA molecule binds across the dimer.

The protein localises to the cytoplasm. It carries out the reaction tRNA(Ser) + L-serine + ATP = L-seryl-tRNA(Ser) + AMP + diphosphate + H(+). It catalyses the reaction tRNA(Sec) + L-serine + ATP = L-seryl-tRNA(Sec) + AMP + diphosphate + H(+). The protein operates within aminoacyl-tRNA biosynthesis; selenocysteinyl-tRNA(Sec) biosynthesis; L-seryl-tRNA(Sec) from L-serine and tRNA(Sec): step 1/1. Functionally, catalyzes the attachment of serine to tRNA(Ser). Is also able to aminoacylate tRNA(Sec) with serine, to form the misacylated tRNA L-seryl-tRNA(Sec), which will be further converted into selenocysteinyl-tRNA(Sec). The chain is Serine--tRNA ligase from Leptothrix cholodnii (strain ATCC 51168 / LMG 8142 / SP-6) (Leptothrix discophora (strain SP-6)).